The following is a 95-amino-acid chain: 1,2-phenylacetyl-CoA epoxidase, subunit B (95 aa).

Homotrimer. Forms a stable heterodimer with PaaC. Probably forms an oligomer with PaaAC.

It participates in aromatic compound metabolism; phenylacetate degradation. Functionally, component of 1,2-phenylacetyl-CoA epoxidase multicomponent enzyme system which catalyzes the reduction of phenylacetyl-CoA (PA-CoA) to form 1,2-epoxyphenylacetyl-CoA. The subunit B may play a regulatory role or be directly involved in electron transport. The sequence is that of 1,2-phenylacetyl-CoA epoxidase, subunit B (paaB) from Escherichia coli (strain K12).